The sequence spans 239 residues: Small ribosomal subunit protein uS2 (239 aa).

This sequence belongs to the universal ribosomal protein uS2 family.

The polypeptide is Small ribosomal subunit protein uS2 (Francisella tularensis subsp. tularensis (strain FSC 198)).